A 296-amino-acid chain; its full sequence is MNDCIGKRLDKLINESQDEVLKRVVGQILEQNGKARISQDWVRRCGDDFNLTAVELALRCLPVAACYASAPVSHFNVGAVAVGQSGAFYFGANQEFSGDAVQQTVHAEQSAVSHAWLAGEVALTDMVVNYTPCGHCRQFMNELNSADRLQIHLPHSRNNRLHSYLPDAFGPKDLNISRVLFDPQPHSFGFTHADPLVQAAADAAEQAYAPYSRALSGVALQVGTQSITGRYAENAAFNPSFLPLQCALNYRRLSGLSDVPVSRIVMAESQGGLSHRSITEQLAHSYLGLEIEYFAL.

CMP/dCMP-type deaminase domains follow at residues 52–172 and 191–296; these read TAVE…FGPK and THAD…YFAL. 93–95 is a substrate binding site; the sequence is NQE. Residue His106 participates in Zn(2+) binding. Catalysis depends on Glu108, which acts as the Proton donor. Zn(2+)-binding residues include Cys133 and Cys136.

Belongs to the cytidine and deoxycytidylate deaminase family. Homodimer. Requires Zn(2+) as cofactor.

It catalyses the reaction cytidine + H2O + H(+) = uridine + NH4(+). The catalysed reaction is 2'-deoxycytidine + H2O + H(+) = 2'-deoxyuridine + NH4(+). Functionally, this enzyme scavenges exogenous and endogenous cytidine and 2'-deoxycytidine for UMP synthesis. This Actinobacillus succinogenes (strain ATCC 55618 / DSM 22257 / CCUG 43843 / 130Z) protein is Cytidine deaminase.